We begin with the raw amino-acid sequence, 172 residues long: DNA-directed RNA polymerase II subunit rpb7 (172 aa).

The protein belongs to the eukaryotic RPB7/RPC8 RNA polymerase subunit family. Component of the RNA polymerase II (Pol II) complex consisting of 12 subunits. RPB4 and RPB7 form a subcomplex that protrudes from the 10-subunit Pol II core complex.

Its subcellular location is the nucleus. In terms of biological role, DNA-dependent RNA polymerase catalyzes the transcription of DNA into RNA using the four ribonucleoside triphosphates as substrates. Component of RNA polymerase II which synthesizes mRNA precursors and many functional non-coding RNAs. Pol II is the central component of the basal RNA polymerase II transcription machinery. It is composed of mobile elements that move relative to each other. RPB7 is part of a subcomplex with RPB4 that binds to a pocket formed by RPB1, RPB2 and RPB6 at the base of the clamp element. The RPB4-RPB7 subcomplex seems to lock the clamp via RPB7 in the closed conformation thus preventing double-stranded DNA to enter the active site cleft. The RPB4-RPB7 subcomplex binds single-stranded DNA and RNA. The sequence is that of DNA-directed RNA polymerase II subunit rpb7 (polr2g) from Dictyostelium discoideum (Social amoeba).